Here is a 325-residue protein sequence, read N- to C-terminus: DNA-directed RNA polymerase subunit alpha (325 aa).

Residues 1 to 231 (MQTSLLKPKI…DQLSVFAALE (231 aa)) are alpha N-terminal domain (alpha-NTD). Residues 246 to 325 (IDPILLRPVD…ENWPPAGLDK (80 aa)) are alpha C-terminal domain (alpha-CTD).

Belongs to the RNA polymerase alpha chain family. In terms of assembly, homodimer. The RNAP catalytic core consists of 2 alpha, 1 beta, 1 beta' and 1 omega subunit. When a sigma factor is associated with the core the holoenzyme is formed, which can initiate transcription.

The enzyme catalyses RNA(n) + a ribonucleoside 5'-triphosphate = RNA(n+1) + diphosphate. In terms of biological role, DNA-dependent RNA polymerase catalyzes the transcription of DNA into RNA using the four ribonucleoside triphosphates as substrates. The protein is DNA-directed RNA polymerase subunit alpha of Burkholderia thailandensis (strain ATCC 700388 / DSM 13276 / CCUG 48851 / CIP 106301 / E264).